A 96-amino-acid chain; its full sequence is Cytoplasmic envelopment protein 3 (96 aa).

Residue Gly2 is the site of N-myristoyl glycine; by host attachment. The Di-leucine-like internalization motif signature appears at 18–19 (LI). The asp/Glu-rich (acidic) stretch occupies residues 37–43 (DIESEEE). Ser40 is modified (phosphoserine). The segment at 44 to 96 (GNFYVPPDMRGVTRAPGRQRLRSSDPPSRHTHRRTPGGACPATQFPPPMSDSE) is disordered. The span at 87–96 (QFPPPMSDSE) shows a compositional bias: pro residues.

This sequence belongs to the herpesviridae cytoplasmic envelopment protein 3 family. Interacts with cytoplasmic envelopment protein 2; this interaction is essential for the proper localization of each protein to the assembly complex and thus for the production of infectious virus. Interacts with gE (via C-terminus). Interacts with gD (via C-terminus). Interacts with UL56. Post-translationally, myristoylation and palmitoylation (probably on one or more of the nearby cysteines at the N-terminus) enable membrane-binding and Golgi apparatus-specific targeting and are essential for efficient packaging. In terms of processing, phosphorylated. Phosphorylation does not seem to be required for recycling to the host Golgi apparatus. Packaging is selective for underphosphorylated forms.

Its subcellular location is the virion tegument. The protein localises to the virion membrane. It is found in the host cell membrane. It localises to the host Golgi apparatus membrane. Plays an important role in the cytoplasmic envelopment of tegument proteins and capsids during the assembly and egress processes. Also participates in viral entry at the fusion step probably by regulating the core fusion machinery. This Homo sapiens (Human) protein is Cytoplasmic envelopment protein 3.